Consider the following 301-residue polypeptide: Pseudouridine-5'-phosphate glycosidase (301 aa).

Glu-23 (proton donor) is an active-site residue. Residues Lys-84 and Val-104 each coordinate substrate. Asp-136 is a Mn(2+) binding site. 138–140 provides a ligand contact to substrate; the sequence is SRD. Lys-157 serves as the catalytic Nucleophile.

This sequence belongs to the pseudouridine-5'-phosphate glycosidase family. Homotrimer. Requires Mn(2+) as cofactor.

It catalyses the reaction D-ribose 5-phosphate + uracil = psi-UMP + H2O. Functionally, catalyzes the reversible cleavage of pseudouridine 5'-phosphate (PsiMP) to ribose 5-phosphate and uracil. Functions biologically in the cleavage direction, as part of a pseudouridine degradation pathway. The chain is Pseudouridine-5'-phosphate glycosidase from Mycoplasmopsis agalactiae (strain NCTC 10123 / CIP 59.7 / PG2) (Mycoplasma agalactiae).